The sequence spans 211 residues: Protein-L-isoaspartate O-methyltransferase (211 aa).

S60 is an active-site residue.

Belongs to the methyltransferase superfamily. L-isoaspartyl/D-aspartyl protein methyltransferase family.

Its subcellular location is the cytoplasm. It carries out the reaction [protein]-L-isoaspartate + S-adenosyl-L-methionine = [protein]-L-isoaspartate alpha-methyl ester + S-adenosyl-L-homocysteine. In terms of biological role, catalyzes the methyl esterification of L-isoaspartyl residues in peptides and proteins that result from spontaneous decomposition of normal L-aspartyl and L-asparaginyl residues. It plays a role in the repair and/or degradation of damaged proteins. The protein is Protein-L-isoaspartate O-methyltransferase of Pseudomonas aeruginosa (strain LESB58).